Here is a 192-residue protein sequence, read N- to C-terminus: Probable GTP-binding protein EngB (192 aa).

The region spanning 22–192 (SLPEIVFVGR…LLEQLENYTG (171 aa)) is the EngB-type G domain. GTP contacts are provided by residues 30-37 (GRSNVGKS), 57-61 (GKTQL), 75-78 (DLPG), 142-145 (TKYD), and 172-174 (YSA). 2 residues coordinate Mg(2+): serine 37 and threonine 59.

The protein belongs to the TRAFAC class TrmE-Era-EngA-EngB-Septin-like GTPase superfamily. EngB GTPase family. Mg(2+) serves as cofactor.

Its function is as follows. Necessary for normal cell division and for the maintenance of normal septation. The sequence is that of Probable GTP-binding protein EngB from Prosthecochloris aestuarii (strain DSM 271 / SK 413).